A 264-amino-acid polypeptide reads, in one-letter code: Zinc import ATP-binding protein ZnuC (264 aa).

Positions 11–226 (IELKGVNVTF…PVFIRFFGNQ (216 aa)) constitute an ABC transporter domain. 43 to 50 (GPNGGGKS) provides a ligand contact to ATP.

It belongs to the ABC transporter superfamily. Zinc importer (TC 3.A.1.15.5) family. In terms of assembly, the complex is composed of two ATP-binding proteins (ZnuC), two transmembrane proteins (ZnuB) and a solute-binding protein (ZnuA).

Its subcellular location is the cell inner membrane. It catalyses the reaction Zn(2+)(out) + ATP(in) + H2O(in) = Zn(2+)(in) + ADP(in) + phosphate(in) + H(+)(in). In terms of biological role, part of the ABC transporter complex ZnuABC involved in zinc import. Responsible for energy coupling to the transport system. This is Zinc import ATP-binding protein ZnuC from Histophilus somni (strain 129Pt) (Haemophilus somnus).